We begin with the raw amino-acid sequence, 638 residues long: Eukaryotic translation initiation factor 2A (638 aa).

WD repeat units follow at residues 287–329 and 331–370; these read SKEG…FDFG and GPRN…KLAN. The segment covering 441 to 450 has biased composition (basic and acidic residues); sequence KITKAKHEGI. The interval 441 to 593 is disordered; sequence KITKAKHEGI…SDKERKIRSV (153 aa). T463 is subject to Phosphothreonine. The segment covering 492–501 has biased composition (low complexity); the sequence is AAAGGVNGNK. Residues 583 to 593 show a composition bias toward basic and acidic residues; sequence ISDKERKIRSV.

Belongs to the WD repeat EIF2A family.

In terms of biological role, functions in the early steps of protein synthesis of a small number of specific mRNAs. Acts by directing the binding of methionyl-tRNAi to 40S ribosomal subunits. In contrast to the eIF-2 complex, it binds methionyl-tRNAi to 40S subunits in a codon-dependent manner, whereas the eIF-2 complex binds methionyl-tRNAi to 40S subunits in a GTP-dependent manner. In Drosophila melanogaster (Fruit fly), this protein is Eukaryotic translation initiation factor 2A.